A 498-amino-acid polypeptide reads, in one-letter code: Glycerol kinase (498 aa).

Thr11 lines the ADP pocket. Residues Thr11, Ser12, and Ser13 each coordinate ATP. Thr11 contributes to the sn-glycerol 3-phosphate binding site. ADP is bound at residue Arg15. Residues Arg81, Glu82, Tyr133, and Asp242 each coordinate sn-glycerol 3-phosphate. The glycerol site is built by Arg81, Glu82, Tyr133, Asp242, and Gln243. ADP contacts are provided by Thr264 and Gly307. ATP contacts are provided by Thr264, Gly307, Gln311, and Gly412. 2 residues coordinate ADP: Gly412 and Asn416.

It belongs to the FGGY kinase family.

It catalyses the reaction glycerol + ATP = sn-glycerol 3-phosphate + ADP + H(+). It functions in the pathway polyol metabolism; glycerol degradation via glycerol kinase pathway; sn-glycerol 3-phosphate from glycerol: step 1/1. Its activity is regulated as follows. Inhibited by fructose 1,6-bisphosphate (FBP). Key enzyme in the regulation of glycerol uptake and metabolism. Catalyzes the phosphorylation of glycerol to yield sn-glycerol 3-phosphate. The polypeptide is Glycerol kinase (Acidovorax sp. (strain JS42)).